The primary structure comprises 102 residues: Small ribosomal subunit protein uS10 (102 aa).

The protein belongs to the universal ribosomal protein uS10 family. Part of the 30S ribosomal subunit.

Its function is as follows. Involved in the binding of tRNA to the ribosomes. In Treponema pallidum (strain Nichols), this protein is Small ribosomal subunit protein uS10.